The chain runs to 123 residues: KxDL motif-containing protein LO9-177 (123 aa).

A KxDL motif is present at residues 78–81; the sequence is KDDL.

The protein belongs to the KXD1 family. Homodimer. Component of a nuclear cell elongation controlling complex made of ILI5/BUL1, LO9-177 and BC1. Binds directly to ILI5/BUL1, ILI4/BU1, BUL2 and BUL3. Binds to BC1 in the nucleus. Interacts with BCL1.

Its subcellular location is the nucleus. It is found in the cytoplasm. Its function is as follows. Contributes, together with ILI5/BUL1 and BC1, to the promotion of leaf inclination and grain size by modulating cell elongation. This is KxDL motif-containing protein LO9-177 from Oryza sativa subsp. indica (Rice).